The sequence spans 479 residues: Calcium uniporter protein, mitochondrial (479 aa).

The transit peptide at 1-54 (MNHALRRATLGLSPGLRASRLQQSFAKHQIPAVYRCEAASTPLQRAFTTSRCFR) directs the protein to the mitochondrion. Over 55 to 323 (QETAAESEKD…DTLAHQGAHR (269 aa)) the chain is Mitochondrial matrix. Disordered stretches follow at residues 56–125 (ETAA…KGRL) and 206–238 (EADQNEQDGRKDDNKKKDNANVASYSGLGHEGP). The stretch at 59–79 (AESEKDDAARREEQSERARKR) forms a coiled coil. Basic and acidic residues predominate over residues 60–75 (ESEKDDAARREEQSER). Residues 83-93 (NVTSGSSAQTL) are compositionally biased toward polar residues. 2 stretches are compositionally biased toward basic and acidic residues: residues 94-122 (ENDRPWHRADSGADPDAPKDVPENKDMKK) and 206-224 (EADQNEQDGRKDDNKKKDN). Residues 324 to 344 (LAQGGFAALAGWWGVVYYVTF) form a helical membrane-spanning segment. Residues 345–354 (HTQAGWDLVE) lie on the Mitochondrial intermembrane side of the membrane. A Selectivity filter motif is present at residues 350-358 (WDLVEPVTY). Residue E354 coordinates Ca(2+). The chain crosses the membrane as a helical span at residues 355–375 (PVTYLAGLTTVMGAYLWFLYI). The Mitochondrial matrix segment spans residues 376-479 (SRDLSYKAAM…GSSDKIKKKQ (104 aa)). Residues 445 to 462 (KVLEEEKQGRDGTKVTEG) show a composition bias toward basic and acidic residues. Residues 445–479 (KVLEEEKQGRDGTKVTEGKDEDDGPGSSDKIKKKQ) form a disordered region.

This sequence belongs to the MCU (TC 1.A.77) family. Homotetramer, assembles in a dimer or dimers configuration with two interfaces.

The protein localises to the mitochondrion inner membrane. The enzyme catalyses Ca(2+)(in) = Ca(2+)(out). In terms of biological role, highly selective calcium channel localized to the inner mitochondrial membrane, which mediates calcium uptake into the mitochondrial matrix. Mitochondrial calcium homeostasis plays key roles in cellular physiology and regulates ATP production, cytoplasmic calcium signals and activation of cell death pathways. Sufficient to operate as a pore-forming channel without the need of calcium-sensor or auxiliary subunit. This is Calcium uniporter protein, mitochondrial from Gibberella zeae (strain ATCC MYA-4620 / CBS 123657 / FGSC 9075 / NRRL 31084 / PH-1) (Wheat head blight fungus).